The sequence spans 378 residues: MLERPPMPSTKTTAAIEPRWRAGQRLFRLLAIGLLIVTIAYDTGANHWQQPLQTLTLPWLVSFALVAVLGMAVVPLLRRLKTGQIIREDGPQSHLQKSGTPTMGGIFFVPTGLGLAFLWTGFAQGKLSPTVGAIALLVLWYAAIGWWDDWQVLRRQSNKGLSARLRLLLEGIGAALFCAWLVASDPTATVVTAPWGWVWPLGMAFIPLAIFVPMAEGNALNLTDGLDGLAGGTGAIALLTLGIILSPYPDLQILAVVMSGACLGFLWHNHHPARVFMGDTGSLALGAVLAGIGLASHHLWELLIVSGLFFVESLSVIAQVLYYKATKGPDGVGKRLLRMAPLHHHFELGGWSELRIVRTFYGVVALLGLLCVLLQWLA.

11 helical membrane passes run 26–46 (LFRL…TGAN), 57–77 (LPWL…VPLL), 103–123 (MGGI…TGFA), 127–147 (LSPT…IGWW), 171–191 (GIGA…ATVV), 195–215 (WGWV…VPMA), 225–245 (GLDG…GIIL), 247–267 (PYPD…GFLW), 275–295 (VFMG…IGLA), 302–322 (LLIV…QVLY), and 356–376 (IVRT…LLQW).

It belongs to the glycosyltransferase 4 family. MraY subfamily. Requires Mg(2+) as cofactor.

The protein localises to the cell inner membrane. The catalysed reaction is UDP-N-acetyl-alpha-D-muramoyl-L-alanyl-gamma-D-glutamyl-meso-2,6-diaminopimeloyl-D-alanyl-D-alanine + di-trans,octa-cis-undecaprenyl phosphate = di-trans,octa-cis-undecaprenyl diphospho-N-acetyl-alpha-D-muramoyl-L-alanyl-D-glutamyl-meso-2,6-diaminopimeloyl-D-alanyl-D-alanine + UMP. It participates in cell wall biogenesis; peptidoglycan biosynthesis. In terms of biological role, catalyzes the initial step of the lipid cycle reactions in the biosynthesis of the cell wall peptidoglycan: transfers peptidoglycan precursor phospho-MurNAc-pentapeptide from UDP-MurNAc-pentapeptide onto the lipid carrier undecaprenyl phosphate, yielding undecaprenyl-pyrophosphoryl-MurNAc-pentapeptide, known as lipid I. This is Phospho-N-acetylmuramoyl-pentapeptide-transferase from Thermosynechococcus vestitus (strain NIES-2133 / IAM M-273 / BP-1).